Reading from the N-terminus, the 270-residue chain is Formamidopyrimidine-DNA glycosylase (270 aa).

P2 (schiff-base intermediate with DNA) is an active-site residue. The active-site Proton donor is the E3. K57 serves as the catalytic Proton donor; for beta-elimination activity. DNA contacts are provided by H90, R109, and K150. Residues 235 to 269 form an FPG-type zinc finger; that stretch reads LVYGNKDKPCPRCGTKIKSIIIGQRNSFFCPQCQK. R259 functions as the Proton donor; for delta-elimination activity in the catalytic mechanism.

The protein belongs to the FPG family. Monomer. Zn(2+) is required as a cofactor.

It carries out the reaction Hydrolysis of DNA containing ring-opened 7-methylguanine residues, releasing 2,6-diamino-4-hydroxy-5-(N-methyl)formamidopyrimidine.. The enzyme catalyses 2'-deoxyribonucleotide-(2'-deoxyribose 5'-phosphate)-2'-deoxyribonucleotide-DNA = a 3'-end 2'-deoxyribonucleotide-(2,3-dehydro-2,3-deoxyribose 5'-phosphate)-DNA + a 5'-end 5'-phospho-2'-deoxyribonucleoside-DNA + H(+). Involved in base excision repair of DNA damaged by oxidation or by mutagenic agents. Acts as a DNA glycosylase that recognizes and removes damaged bases. Has a preference for oxidized purines, such as 7,8-dihydro-8-oxoguanine (8-oxoG). Has AP (apurinic/apyrimidinic) lyase activity and introduces nicks in the DNA strand. Cleaves the DNA backbone by beta-delta elimination to generate a single-strand break at the site of the removed base with both 3'- and 5'-phosphates. This Histophilus somni (strain 129Pt) (Haemophilus somnus) protein is Formamidopyrimidine-DNA glycosylase.